Here is a 270-residue protein sequence, read N- to C-terminus: Putative hydro-lyase H16_B1759 (270 aa).

It belongs to the D-glutamate cyclase family.

The protein is Putative hydro-lyase H16_B1759 of Cupriavidus necator (strain ATCC 17699 / DSM 428 / KCTC 22496 / NCIMB 10442 / H16 / Stanier 337) (Ralstonia eutropha).